We begin with the raw amino-acid sequence, 407 residues long: Homeobox even-skipped homolog protein 1 (407 aa).

Disordered stretches follow at residues 29 to 120 (EAVG…SDFY) and 137 to 179 (EYQH…ACSA). A compositionally biased stretch (polar residues) spans 102 to 114 (DSLSGQGQPSSSD). A DNA-binding region (homeobox) is located at residues 183-242 (MRRYRTAFTREQIARLEKEFYRENYVSRPRRCELAAALNLPETTIKVWFQNRRMKDKRQR).

It belongs to the even-skipped homeobox family.

The protein localises to the nucleus. Its function is as follows. May play a role in the specification of neuronal cell types. The polypeptide is Homeobox even-skipped homolog protein 1 (EVX1) (Homo sapiens (Human)).